The chain runs to 453 residues: Gamma-glutamylpolyamine synthetase GlnA2 (453 aa).

In terms of domain architecture, GS beta-grasp spans 15–100; that stretch reads RDIRFVRLWF…MFCDILMPDG (86 aa). The region spanning 107–453 is the GS catalytic domain; sequence PRYVLKRALA…FELRKSLPVL (347 aa). Glutamate 130 and glutamate 132 together coordinate Mg(2+). An ATP-binding site is contributed by glutamate 182. Positions 187 and 194 each coordinate Mg(2+). Position 239 (glycine 239) interacts with L-glutamate. Histidine 243 contributes to the Mg(2+) binding site. 245-247 is a binding site for ATP; sequence HLS. L-glutamate-binding residues include arginine 296, glutamate 310, and arginine 322. Residues arginine 322 and arginine 327 each coordinate ATP. Glutamate 342 serves as a coordination point for Mg(2+). Position 344 (arginine 344) interacts with L-glutamate.

Belongs to the glutamine synthetase family. Requires Mg(2+) as cofactor.

It catalyses the reaction putrescine + L-glutamate + ATP = gamma-L-glutamylputrescine + ADP + phosphate + H(+). The catalysed reaction is spermine + L-glutamate + ATP = gamma-L-glutamylspermine + ADP + phosphate + H(+). The enzyme catalyses spermidine + L-glutamate + ATP = gamma-L-glutamylspermidine + ADP + phosphate + H(+). It carries out the reaction cadaverine + L-glutamate + ATP = gamma-L-glutamylcadaverine + ADP + phosphate + H(+). The protein operates within amine and polyamine degradation; putrescine degradation. It participates in amine and polyamine degradation; spermidine degradation. It functions in the pathway amine and polyamine degradation; spermine degradation. Its activity is regulated as follows. No effect on activity with glutamine synthetase (GS) inhibitor methionine sulfoximine (MSO). Functionally, involved in the catabolism of polyamines. Catalyzes the ATP-dependent gamma-glutamylation of polyamines. Substrates include putrescine, cadaverine, spermidine and spermine, with a preference for short-chain polyamine putrescine. No complementation of the L-glutamine auxotrophy of an E.coli glnA mutant. Together with GlnA3, enables survival of S.coelicolor under exposure to high local environmental polyamine concentrations, which is toxic to the cells. The sequence is that of Gamma-glutamylpolyamine synthetase GlnA2 from Streptomyces coelicolor (strain ATCC BAA-471 / A3(2) / M145).